We begin with the raw amino-acid sequence, 70 residues long: uncharacterized protein (70 aa).

This is an uncharacterized protein from Rickettsia conorii (strain ATCC VR-613 / Malish 7).